Here is a 549-residue protein sequence, read N- to C-terminus: Oxygen-dependent choline dehydrogenase (549 aa).

FAD is bound at residue 4–33 (DFVIIGSGSAGSALAYRLSEDGRNSVIVLE). Catalysis depends on His465, which acts as the Proton acceptor.

This sequence belongs to the GMC oxidoreductase family. FAD is required as a cofactor.

The protein localises to the cell membrane. The catalysed reaction is choline + A = betaine aldehyde + AH2. The enzyme catalyses betaine aldehyde + NAD(+) + H2O = glycine betaine + NADH + 2 H(+). The protein operates within amine and polyamine biosynthesis; betaine biosynthesis via choline pathway; betaine aldehyde from choline (cytochrome c reductase route): step 1/1. In terms of biological role, involved in the biosynthesis of the osmoprotectant glycine betaine. Catalyzes the oxidation of choline to betaine aldehyde and betaine aldehyde to glycine betaine at the same rate. The chain is Oxygen-dependent choline dehydrogenase from Rhizobium meliloti (strain 1021) (Ensifer meliloti).